The sequence spans 87 residues: Defensin-like protein 175 (87 aa).

A signal peptide spans 1–23 (MAKATSSLVVPIIFLVIFALVEQ). 4 disulfide bridges follow: cysteine 27–cysteine 66, cysteine 36–cysteine 55, cysteine 39–cysteine 60, and cysteine 43–cysteine 62.

This sequence belongs to the DEFL family.

Its subcellular location is the secreted. In Arabidopsis thaliana (Mouse-ear cress), this protein is Defensin-like protein 175.